The primary structure comprises 1384 residues: Sterol 3-beta-glucosyltransferase (1384 aa).

Disordered regions lie at residues 1–64 (MPNM…DGQL), 86–189 (ARFD…TPRA), and 204–229 (DKKQ…QSCA). Positions 7 to 19 (LLEDAKRRVDRRL) are enriched in basic and acidic residues. The segment covering 21 to 36 (ASRQSISSSRIFSSAF) has biased composition (low complexity). The segment covering 38–47 (DRLKDDHDAQ) has biased composition (basic and acidic residues). The span at 146 to 156 (LRSLKPSPKSS) shows a compositional bias: low complexity. The span at 158–172 (GTETTVQTEPPTSDE) shows a compositional bias: polar residues. Over residues 174-189 (SPLASPRRARSATPRA) the composition is skewed to low complexity. Over residues 209-229 (ADQPSSSTKGETDGTSEQSCA) the composition is skewed to polar residues. Residues 237 to 284 (KEMFGFEMPEKVLMEYACSLLQNILLQGYMYVTEGHICFYAYLPRKSA) form the GRAM 1 domain. The PH domain maps to 285 to 384 (VTIRSGYLHK…WVKALQKVIF (100 aa)). Disordered stretches follow at residues 457 to 526 (MKTS…RQRD) and 560 to 629 (NRSD…VNSS). Polar residues-rich tracts occupy residues 458 to 473 (KTSQ…TSPA), 483 to 494 (WSLNSDLSQSRG), and 560 to 572 (NRSD…TIHT). A compositionally biased stretch (basic and acidic residues) spans 578 to 588 (PSGDRTGRRLS). Residues 604–629 (RNGQEMQYASSDSDQGTQHPSKVNSS) are compositionally biased toward polar residues. One can recognise a GRAM 2 domain in the interval 714–817 (RFRAHFALPS…RDDCAVTVHQ (104 aa)). S901, R902, D904, A1204, H1206, H1219, G1223, T1224, D1243, and Q1244 together coordinate UDP-alpha-D-glucose. Over residues 1322-1336 (VSSTPFSPTPSAKTT) the composition is skewed to polar residues. The interval 1322-1350 (VSSTPFSPTPSAKTTAEQEEDDVDDSEEW) is disordered. A compositionally biased stretch (acidic residues) spans 1338 to 1350 (EQEEDDVDDSEEW).

It belongs to the glycosyltransferase 28 family.

The protein resides in the cytoplasm. It localises to the preautophagosomal structure membrane. The enzyme catalyses a sterol + UDP-alpha-D-glucose = a sterol 3-beta-D-glucoside + UDP + H(+). The catalysed reaction is ergosterol + UDP-alpha-D-glucose = ergosteryl 3-beta-D-glucoside + UDP + H(+). In terms of biological role, sterol glycosyltransferase responsible for the glycosylation of ergosterol to form ergosterol-glucoside. Involved in cytoplasm to vacuole transport (Cvt), pexophagy or nonselective autophagy. The sequence is that of Sterol 3-beta-glucosyltransferase from Aspergillus oryzae (strain ATCC 42149 / RIB 40) (Yellow koji mold).